The sequence spans 362 residues: Phospho-N-acetylmuramoyl-pentapeptide-transferase (362 aa).

The next 10 helical transmembrane spans lie at Gly28–Leu48, Thr75–Leu95, Val100–Leu120, Ala134–Gln154, Val170–Gly190, Gly201–Val221, Leu241–Pro261, Val265–Val285, Leu290–Val310, and Thr339–Leu359.

The protein belongs to the glycosyltransferase 4 family. MraY subfamily. Requires Mg(2+) as cofactor.

The protein localises to the cell inner membrane. It carries out the reaction UDP-N-acetyl-alpha-D-muramoyl-L-alanyl-gamma-D-glutamyl-meso-2,6-diaminopimeloyl-D-alanyl-D-alanine + di-trans,octa-cis-undecaprenyl phosphate = di-trans,octa-cis-undecaprenyl diphospho-N-acetyl-alpha-D-muramoyl-L-alanyl-D-glutamyl-meso-2,6-diaminopimeloyl-D-alanyl-D-alanine + UMP. It participates in cell wall biogenesis; peptidoglycan biosynthesis. Functionally, catalyzes the initial step of the lipid cycle reactions in the biosynthesis of the cell wall peptidoglycan: transfers peptidoglycan precursor phospho-MurNAc-pentapeptide from UDP-MurNAc-pentapeptide onto the lipid carrier undecaprenyl phosphate, yielding undecaprenyl-pyrophosphoryl-MurNAc-pentapeptide, known as lipid I. This chain is Phospho-N-acetylmuramoyl-pentapeptide-transferase, found in Paramagnetospirillum magneticum (strain ATCC 700264 / AMB-1) (Magnetospirillum magneticum).